We begin with the raw amino-acid sequence, 717 residues long: DNA ligase (717 aa).

Residues 44–48, 93–94, and Glu127 each bind NAD(+); these read DADYD and SL. Lys129 (N6-AMP-lysine intermediate) is an active-site residue. NAD(+) contacts are provided by Arg150, Glu186, Lys302, and Lys326. 4 residues coordinate Zn(2+): Cys431, Cys434, Cys455, and Cys461. Positions 639–717 constitute a BRCT domain; sequence ATDSPVAGKT…EDEWLALIGG (79 aa).

This sequence belongs to the NAD-dependent DNA ligase family. LigA subfamily. Requires Mg(2+) as cofactor. Mn(2+) is required as a cofactor.

The enzyme catalyses NAD(+) + (deoxyribonucleotide)n-3'-hydroxyl + 5'-phospho-(deoxyribonucleotide)m = (deoxyribonucleotide)n+m + AMP + beta-nicotinamide D-nucleotide.. Functionally, DNA ligase that catalyzes the formation of phosphodiester linkages between 5'-phosphoryl and 3'-hydroxyl groups in double-stranded DNA using NAD as a coenzyme and as the energy source for the reaction. It is essential for DNA replication and repair of damaged DNA. The polypeptide is DNA ligase (Sinorhizobium medicae (strain WSM419) (Ensifer medicae)).